The primary structure comprises 154 residues: Aspartate carbamoyltransferase regulatory chain (154 aa).

Zn(2+) is bound by residues C110, C115, C136, and C139.

The protein belongs to the PyrI family. As to quaternary structure, contains catalytic and regulatory chains. Zn(2+) serves as cofactor.

Functionally, involved in allosteric regulation of aspartate carbamoyltransferase. This Halobacterium salinarum (strain ATCC 700922 / JCM 11081 / NRC-1) (Halobacterium halobium) protein is Aspartate carbamoyltransferase regulatory chain.